The primary structure comprises 2298 residues: Protein Ycf2 (2298 aa).

1652–1659 (GSIGTGRS) provides a ligand contact to ATP.

This sequence belongs to the Ycf2 family.

The protein localises to the plastid. The protein resides in the chloroplast stroma. Functionally, probable ATPase of unknown function. Its presence in a non-photosynthetic plant (Epifagus virginiana) and experiments in tobacco indicate that it has an essential function which is probably not related to photosynthesis. The polypeptide is Protein Ycf2 (Aethionema cordifolium (Lebanon stonecress)).